The primary structure comprises 357 residues: tRNA N6-adenosine threonylcarbamoyltransferase (357 aa).

Positions 120 and 124 each coordinate Fe cation. Residues L143–G147, D176, G189, and N289 each bind substrate. Residue D317 participates in Fe cation binding.

The protein belongs to the KAE1 / TsaD family. The cofactor is Fe(2+).

The protein resides in the cytoplasm. It carries out the reaction L-threonylcarbamoyladenylate + adenosine(37) in tRNA = N(6)-L-threonylcarbamoyladenosine(37) in tRNA + AMP + H(+). In terms of biological role, required for the formation of a threonylcarbamoyl group on adenosine at position 37 (t(6)A37) in tRNAs that read codons beginning with adenine. Is involved in the transfer of the threonylcarbamoyl moiety of threonylcarbamoyl-AMP (TC-AMP) to the N6 group of A37, together with TsaE and TsaB. TsaD likely plays a direct catalytic role in this reaction. The chain is tRNA N6-adenosine threonylcarbamoyltransferase from Polynucleobacter necessarius subsp. necessarius (strain STIR1).